A 968-amino-acid chain; its full sequence is Serine/threonine-protein kinase apg-1 (968 aa).

The Protein kinase domain maps to 24-329 (FVIDQEIGKG…FEDLFNHPVV (306 aa)). ATP is bound by residues 30 to 38 (IGKGSFAKV) and Lys53. Catalysis depends on Asp167, which acts as the Proton acceptor. Disordered stretches follow at residues 334–500 (PGLV…ERAA), 528–585 (MYPQ…LGTS), 884–906 (LPKR…LSDE), and 939–968 (ASKA…SVPA). Basic and acidic residues-rich tracts occupy residues 350 to 361 (LKEERPVSRAED), 371 to 380 (LRKDLADREG), and 417 to 431 (PRED…KEAA). Polar residues-rich tracts occupy residues 441–452 (VQPSTSAPTRPS), 528–538 (MYPQQPQSPKS), and 545–557 (ATQQ…TSGA).

This sequence belongs to the protein kinase superfamily. Ser/Thr protein kinase family. APG1/unc-51/ULK1 subfamily. In terms of assembly, homodimer. Forms a ternary complex with ATG13 and ATG17.

The protein resides in the cytoplasm. It localises to the preautophagosomal structure membrane. It catalyses the reaction L-seryl-[protein] + ATP = O-phospho-L-seryl-[protein] + ADP + H(+). The enzyme catalyses L-threonyl-[protein] + ATP = O-phospho-L-threonyl-[protein] + ADP + H(+). In terms of biological role, serine/threonine protein kinase involved in the cytoplasm to vacuole transport (Cvt) and found to be essential in autophagy, where it is required for the formation of autophagosomes. Involved in the clearance of protein aggregates which cannot be efficiently cleared by the proteasome. Required for selective autophagic degradation of the nucleus (nucleophagy) as well as for mitophagy which contributes to regulate mitochondrial quantity and quality by eliminating the mitochondria to a basal level to fulfill cellular energy requirements and preventing excess ROS production. Also involved in endoplasmic reticulum-specific autophagic process, in selective removal of ER-associated degradation (ERAD) substrates. Plays a key role in ATG9 and ATG23 cycling through the pre-autophagosomal structure and is necessary to promote ATG18 binding to ATG9 through phosphorylation of ATG9. Catalyzes phosphorylation of ATG4, decreasing the interaction between ATG4 and ATG8 and impairing deconjugation of PE-conjugated forms of ATG8. In Neurospora crassa (strain ATCC 24698 / 74-OR23-1A / CBS 708.71 / DSM 1257 / FGSC 987), this protein is Serine/threonine-protein kinase apg-1.